A 452-amino-acid chain; its full sequence is ADP-dependent glucose/glucosamine kinase (452 aa).

The region spanning 1-452 (MSWDEMYRDA…AFVSEFSLSS (452 aa)) is the ADPK domain. D-glucose-binding positions include D33, E87, 111-112 (GQ), and H174. E264 is a Mg(2+) binding site. N290 lines the ADP pocket. A Mg(2+)-binding site is contributed by E293. ADP-binding positions include 339–340 (HT), V426, and G436. Residue D437 participates in D-glucose binding. Mg(2+) is bound at residue D437. The active-site Proton acceptor is the D437.

It belongs to the ADP-dependent glucokinase family. The cofactor is Mg(2+).

It localises to the cytoplasm. It carries out the reaction D-glucose + ADP = D-glucose 6-phosphate + AMP + H(+). The enzyme catalyses D-glucosamine + ADP = D-glucosamine 6-phosphate + AMP + H(+). It participates in carbohydrate degradation; glycolysis. Its function is as follows. Catalyzes the ADP-dependent phosphorylation of D-glucose to D-glucose 6-phosphate and glucosamine to glucosamine 6-phosphate. This Pyrococcus abyssi (strain GE5 / Orsay) protein is ADP-dependent glucose/glucosamine kinase.